Consider the following 280-residue polypeptide: Large ribosomal subunit protein uL2 (280 aa).

Disordered regions lie at residues 1–59 (MAIR…GGHK) and 223–280 (GVVM…NKKR). Residues 23–33 (ELTRSTPEKSL) are compositionally biased toward basic and acidic residues. 2 stretches are compositionally biased toward basic residues: residues 36 to 59 (PLHK…GGHK) and 269 to 280 (VRRRRSNKNKKR).

It belongs to the universal ribosomal protein uL2 family. As to quaternary structure, part of the 50S ribosomal subunit. Forms a bridge to the 30S subunit in the 70S ribosome.

Functionally, one of the primary rRNA binding proteins. Required for association of the 30S and 50S subunits to form the 70S ribosome, for tRNA binding and peptide bond formation. It has been suggested to have peptidyltransferase activity; this is somewhat controversial. Makes several contacts with the 16S rRNA in the 70S ribosome. The chain is Large ribosomal subunit protein uL2 from Corynebacterium kroppenstedtii (strain DSM 44385 / JCM 11950 / CIP 105744 / CCUG 35717).